Here is a 487-residue protein sequence, read N- to C-terminus: Proline--tRNA ligase (487 aa).

Belongs to the class-II aminoacyl-tRNA synthetase family. ProS type 3 subfamily. In terms of assembly, homodimer.

It is found in the cytoplasm. It carries out the reaction tRNA(Pro) + L-proline + ATP = L-prolyl-tRNA(Pro) + AMP + diphosphate. Functionally, catalyzes the attachment of proline to tRNA(Pro) in a two-step reaction: proline is first activated by ATP to form Pro-AMP and then transferred to the acceptor end of tRNA(Pro). The chain is Proline--tRNA ligase from Pyrobaculum calidifontis (strain DSM 21063 / JCM 11548 / VA1).